Here is a 2210-residue protein sequence, read N- to C-terminus: Orsellinic acid synthase ArmB (2210 aa).

The N-terminal acylcarrier protein transacylase domain (SAT) stretch occupies residues 38–261; that stretch reads LLLDACHYAF…HKTTVDALYH (224 aa). Residues 391–817 form the Ketosynthase family 3 (KS3) domain; sequence QEPIAICGMS…GSNGALLLEE (427 aa). Catalysis depends on for beta-ketoacyl synthase activity residues Cys-561, His-696, and His-736. Positions 915-1240 are malonyl-CoA:ACP transacylase (MAT) domain; the sequence is VFVFSGQGGQ…GLTLSSSLSQ (326 aa). Residue Ser-1009 is the For acyl/malonyl transferase activity of the active site. Residues 1307–1437 are N-terminal hotdog fold; that stretch reads MLQSWAQFPS…GQFRPLLVVD (131 aa). The 308-residue stretch at 1307 to 1614 folds into the PKS/mFAS DH domain; the sequence is MLQSWAQFPS…FKKLRLNTLQ (308 aa). Positions 1336–1611 are product template (PT) domain; that stretch reads ITGHIVGDVP…GMCFKKLRLN (276 aa). His-1339 functions as the Proton acceptor; for dehydratase activity in the catalytic mechanism. Residues 1464 to 1614 are C-terminal hotdog fold; sequence AEVFTTRTAY…FKKLRLNTLQ (151 aa). Asp-1525 (proton donor; for dehydratase activity) is an active-site residue. The region spanning 1660–1735 is the Carrier 1 domain; the sequence is VDVQNTVLNI…ELVREISSTV (76 aa). Ser-1694 carries the post-translational modification O-(pantetheine 4'-phosphoryl)serine. The disordered stretch occupies residues 1739–1761; that stretch reads AATAVNTPETASTPEPTLQGDAS. In terms of domain architecture, Carrier 2 spans 1845–1922; the sequence is SSPSSDLVDT…AVNQYISSKR (78 aa). O-(pantetheine 4'-phosphoryl)serine is present on Ser-1882. The interval 1920–1946 is disordered; it reads SKRPGKSPKQVEETAMDPDREEDLSDL. Acidic residues predominate over residues 1933 to 1944; it reads TAMDPDREEDLS. The thioesterase (TE) domain stretch occupies residues 1963 to 2202; it reads VPMSVQKSSS…LGAVTQALVD (240 aa).

Its pathway is secondary metabolite biosynthesis. Functionally, non-reducing polyketide synthase, part of the gene cluster that mediates the biosynthesis of melleolides, a range of antifungal and phytotoxic polyketide derivatives composed of an orsellinic acid (OA) moiety esterified to various sesquiterpene alcohols. The first step in melleolides biosynthesis is performed by the delta(6)-protoilludene synthase PRO1 which catalyzes the cyclization of farnesyl diphosphate to protoilludene. The orsellinic acid synthase armB produces OA by condensing acetyl-CoA with 3 malonyl-CoA units in a three-round chain elongation reaction folowed by a C2-C7 ring closure. ArmB further catalyzes the trans-esterification of OA to the various sesquiterpene alcohols resulting from the hydroxylation of protoilludene. The melleolides cluster also includes 5 cytochrome P450 monooxygenases, 4 NAD(+)-dependent oxidoreductases, one flavin-dependent oxidoreductase, and one O-methyltransferase. The cytochrome P450 monooxygenases may be involved in protoilludene hydroxylation to elaborate melleolides with multiple alcohol groups, such as melleolide D, which carries alcohol functionalities at C-4, C-5, C-10, and C-13. The role of the NAD(+)-dependent enzymes remains unknown. Numerous melleolides, including arnamial, show 5'-O-methylation of the aromatic moiety which may be catalyzed by the methyltransferase encoded in the cluster. The flavin-dependent oxidoreductase might represent the dehydrogenase yielding the aldehyde in position 1 of arnamial and other melleolides. Finally, several halogenase localized outside of the cluster (armH1 to armH5), are able to catalyze the transfer of a single chlorine atom to the melleolide backbone, resulting in a 6'-chloromelleolide product. In Armillaria ostoyae (Armillaria root rot fungus), this protein is Orsellinic acid synthase ArmB.